Here is a 257-residue protein sequence, read N- to C-terminus: Imidazole glycerol phosphate synthase subunit HisF (257 aa).

Catalysis depends on residues D11 and D130.

The protein belongs to the HisA/HisF family. Heterodimer of HisH and HisF.

Its subcellular location is the cytoplasm. It catalyses the reaction 5-[(5-phospho-1-deoxy-D-ribulos-1-ylimino)methylamino]-1-(5-phospho-beta-D-ribosyl)imidazole-4-carboxamide + L-glutamine = D-erythro-1-(imidazol-4-yl)glycerol 3-phosphate + 5-amino-1-(5-phospho-beta-D-ribosyl)imidazole-4-carboxamide + L-glutamate + H(+). It functions in the pathway amino-acid biosynthesis; L-histidine biosynthesis; L-histidine from 5-phospho-alpha-D-ribose 1-diphosphate: step 5/9. Its function is as follows. IGPS catalyzes the conversion of PRFAR and glutamine to IGP, AICAR and glutamate. The HisF subunit catalyzes the cyclization activity that produces IGP and AICAR from PRFAR using the ammonia provided by the HisH subunit. The sequence is that of Imidazole glycerol phosphate synthase subunit HisF from Afipia carboxidovorans (strain ATCC 49405 / DSM 1227 / KCTC 32145 / OM5) (Oligotropha carboxidovorans).